The sequence spans 32 residues: Cyclotide glopa B (32 aa).

The segment at residues 1–32 (GGSVPCIETCVWTGCFLVPGCSCKSDKKCYLN) is a cross-link (cyclopeptide (Gly-Asn)). 3 cysteine pairs are disulfide-bonded: cysteine 6-cysteine 21, cysteine 10-cysteine 23, and cysteine 15-cysteine 29.

Post-translationally, this is a cyclic peptide.

Functionally, probably participates in a plant defense mechanism. In Gloeospermum pauciflorum, this protein is Cyclotide glopa B.